The primary structure comprises 296 residues: Bifunctional protein FolD 1 (296 aa).

Residues 167 to 169 (GCG) and Ile235 each bind NADP(+).

The protein belongs to the tetrahydrofolate dehydrogenase/cyclohydrolase family. In terms of assembly, homodimer.

The catalysed reaction is (6R)-5,10-methylene-5,6,7,8-tetrahydrofolate + NADP(+) = (6R)-5,10-methenyltetrahydrofolate + NADPH. It carries out the reaction (6R)-5,10-methenyltetrahydrofolate + H2O = (6R)-10-formyltetrahydrofolate + H(+). Its pathway is one-carbon metabolism; tetrahydrofolate interconversion. In terms of biological role, catalyzes the oxidation of 5,10-methylenetetrahydrofolate to 5,10-methenyltetrahydrofolate and then the hydrolysis of 5,10-methenyltetrahydrofolate to 10-formyltetrahydrofolate. The polypeptide is Bifunctional protein FolD 1 (Nocardioides sp. (strain ATCC BAA-499 / JS614)).